Consider the following 396-residue polypeptide: DNA polymerase IV (396 aa).

In terms of domain architecture, UmuC spans 6–186; sequence IIHVDMDAFY…LPISRLWGVG (181 aa). 2 residues coordinate Mg(2+): Asp-10 and Asp-104. The active site involves Glu-105.

Belongs to the DNA polymerase type-Y family. In terms of assembly, monomer. Mg(2+) is required as a cofactor.

Its subcellular location is the cytoplasm. It carries out the reaction DNA(n) + a 2'-deoxyribonucleoside 5'-triphosphate = DNA(n+1) + diphosphate. Functionally, poorly processive, error-prone DNA polymerase involved in untargeted mutagenesis. Copies undamaged DNA at stalled replication forks, which arise in vivo from mismatched or misaligned primer ends. These misaligned primers can be extended by PolIV. Exhibits no 3'-5' exonuclease (proofreading) activity. May be involved in translesional synthesis, in conjunction with the beta clamp from PolIII. The polypeptide is DNA polymerase IV (Desulfatibacillum aliphaticivorans).